Consider the following 126-residue polypeptide: Small ribosomal subunit protein uS13 (126 aa).

Residues 92–126 are disordered; that stretch reads HRRGLPVRGQRTKTNARTRKGPRKTVAGKKKATRK.

The protein belongs to the universal ribosomal protein uS13 family. Part of the 30S ribosomal subunit. Forms a loose heterodimer with protein S19. Forms two bridges to the 50S subunit in the 70S ribosome.

Its function is as follows. Located at the top of the head of the 30S subunit, it contacts several helices of the 16S rRNA. In the 70S ribosome it contacts the 23S rRNA (bridge B1a) and protein L5 of the 50S subunit (bridge B1b), connecting the 2 subunits; these bridges are implicated in subunit movement. Contacts the tRNAs in the A and P-sites. The polypeptide is Small ribosomal subunit protein uS13 (Deinococcus geothermalis (strain DSM 11300 / CIP 105573 / AG-3a)).